The following is a 1026-amino-acid chain: Multidrug resistance protein MdtC (1026 aa).

11 helical membrane passes run I15–A35, E333–L353, L360–C380, L387–L407, V431–L451, F463–P483, L528–P548, L853–S873, L897–V917, P953–G973, and I984–V1004.

This sequence belongs to the resistance-nodulation-cell division (RND) (TC 2.A.6) family. MdtC subfamily. In terms of assembly, part of a tripartite efflux system composed of MdtA, MdtB and MdtC. MdtC forms a heteromultimer with MdtB.

Its subcellular location is the cell inner membrane. The protein is Multidrug resistance protein MdtC of Salmonella agona (strain SL483).